The following is a 997-amino-acid chain: Burkholderia TALE-like protein 2 (997 aa).

A Cryptic repeat -1 repeat occupies 19 to 50; the sequence is LSPLERIKIEKHYGGGATLAFISNQHDELAQV. The Cryptic repeat 0 repeat unit spans residues 51–83; the sequence is LSRADILKIASYDCAAQALQAVLDCGPMLGKRG. Core repeat repeat units follow at residues 84-116, 117-147, 148-180, 181-213, 214-244, 245-277, 278-310, 311-343, 344-376, 377-409, 410-442, 443-475, 476-508, 509-539, 540-572, 573-605, 606-638, 639-671, 672-704, 705-737, 738-770, 771-803, 804-836, 837-869, 870-902, 903-935, and 936-967; these read FSRA…GKRG, FSQV…GERG, FSRG…RERG, FNQA…GKRG, FSRV…RKRG, FHPT…RERG, FSQA…CERG, FSQP…RERG, FSQA…HERG, FSQA…RERG, VRQA…RERG, FNQA…DKRG, FNPT…RERG, FNQA…RERG, FSQP…HKRG, FGQP…RERG, FSQS…RESD, FRQA…RQRG, FNRA…DERG, FNLT…QQRG, FNLT…RQRG, FNLI…RQRD, and LSLI…MQAG. The buD domain stretch occupies residues 84–967; that stretch reads FSRADIVRIA…KYGPVLMQAG (884 aa). 4 ANK repeats span residues 772–801, 805–834, 838–867, and 871–900; these read RQAD…RLRQ, NRAS…TLDE, NLTN…TLQQ, and NLTD…TLRQ. The Cryptic repeat +1 repeat unit spans residues 968–997; sequence RSNEEIVHVAARRGGAGRIRKMVALLLERQ.

Belongs to the transcription activator-like effector (TALE) family. Bat subfamily.

Its function is as follows. Binds to DNA in a sequence-specific manner. The protein is Burkholderia TALE-like protein 2 of Mycetohabitans rhizoxinica (strain DSM 19002 / CIP 109453 / HKI 454) (Paraburkholderia rhizoxinica).